Here is a 165-residue protein sequence, read N- to C-terminus: Nucleotide-binding protein Syncc9902_1708 (165 aa).

The protein belongs to the YajQ family.

Functionally, nucleotide-binding protein. The sequence is that of Nucleotide-binding protein Syncc9902_1708 from Synechococcus sp. (strain CC9902).